Consider the following 621-residue polypeptide: 1-deoxy-D-xylulose-5-phosphate synthase (621 aa).

Residues H80 and 121–123 contribute to the thiamine diphosphate site; that span reads GHS. Residue D152 participates in Mg(2+) binding. Residues 153–154, N181, Y288, and E370 each bind thiamine diphosphate; that span reads GA. Residue N181 coordinates Mg(2+).

It belongs to the transketolase family. DXPS subfamily. As to quaternary structure, homodimer. It depends on Mg(2+) as a cofactor. Thiamine diphosphate serves as cofactor.

It carries out the reaction D-glyceraldehyde 3-phosphate + pyruvate + H(+) = 1-deoxy-D-xylulose 5-phosphate + CO2. It participates in metabolic intermediate biosynthesis; 1-deoxy-D-xylulose 5-phosphate biosynthesis; 1-deoxy-D-xylulose 5-phosphate from D-glyceraldehyde 3-phosphate and pyruvate: step 1/1. Catalyzes the acyloin condensation reaction between C atoms 2 and 3 of pyruvate and glyceraldehyde 3-phosphate to yield 1-deoxy-D-xylulose-5-phosphate (DXP). The polypeptide is 1-deoxy-D-xylulose-5-phosphate synthase (Pseudoalteromonas atlantica (strain T6c / ATCC BAA-1087)).